The primary structure comprises 211 residues: Transcriptional regulatory protein RcsA (211 aa).

Residues 135–200 (SEVHPFTLSQ…VIYHVVRLTD (66 aa)) form the HTH luxR-type domain. A DNA-binding region (H-T-H motif) is located at residues 159–178 (TIQISDKMQIKAKTVSSHKG).

The protein belongs to the RcsA family.

Functionally, component of the Rcs signaling system, which controls transcription of numerous genes. Binds to DNA to regulate expression of genes. This chain is Transcriptional regulatory protein RcsA, found in Erwinia amylovora (Fire blight bacteria).